The chain runs to 531 residues: Protein tweety homolog 2-like (531 aa).

Residues 1–44 (MASSRQDYIAPWWTYWLHNFPHLNFNFQTVDNTFKPEDASYQQS) are Extracellular-facing. The helical transmembrane segment at 45-65 (LVFLACVSAVALGLCLLLLSV) threads the bilayer. The Cytoplasmic portion of the chain corresponds to 66 to 87 (YLTCLCCCRREEDEEVKRPDTC). Residues 88–108 (CVTWAAVITGLVICSAVGVGF) form a helical membrane-spanning segment. The Extracellular segment spans residues 109–213 (YGNSETNDGV…RTAFIEYYRW (105 aa)). Asparagine 129 carries N-linked (GlcNAc...) asparagine glycosylation. The chain crosses the membrane as a helical span at residues 214–234 (LTYLLLLILDLVICLLACLAL). Topologically, residues 235–239 (AKQSR) are cytoplasmic. The helical transmembrane segment at 240–260 (WLLTVIMVCGMLTLIMSWASL) threads the bilayer. Residues 261-389 (GAGTATAVGT…GVCYDGVEGL (129 aa)) are Extracellular-facing. N-linked (GlcNAc...) asparagine glycans are attached at residues asparagine 283 and asparagine 352. A helical transmembrane segment spans residues 390–410 (LYLCLFSLLAACAFCALLCAV). The Cytoplasmic segment spans residues 411 to 531 (PRAWMLIAIR…IRHFGTDFQV (121 aa)).

It belongs to the tweety family.

The protein resides in the cell membrane. In terms of biological role, probable large-conductance Ca(2+)-activated chloride channel. This Danio rerio (Zebrafish) protein is Protein tweety homolog 2-like (ttyh2l).